The following is an 811-amino-acid chain: Elongation factor G, mitochondrial (811 aa).

A mitochondrion-targeting transit peptide spans 1 to 64 (MSAIARAAAR…FQQSFQRRWA (64 aa)). The 299-residue stretch at 96 to 394 (RRQRNVGISA…GVCAYLPNPS (299 aa)) folds into the tr-type G domain. Residues 105–112 (AHIDSGKT), 192–196 (DTPGH), and 246–249 (NKMD) each bind GTP.

Belongs to the TRAFAC class translation factor GTPase superfamily. Classic translation factor GTPase family. EF-G/EF-2 subfamily.

It is found in the mitochondrion. The protein operates within protein biosynthesis; polypeptide chain elongation. Mitochondrial GTPase that catalyzes the GTP-dependent ribosomal translocation step during translation elongation. During this step, the ribosome changes from the pre-translocational (PRE) to the post-translocational (POST) state as the newly formed A-site-bound peptidyl-tRNA and P-site-bound deacylated tRNA move to the P and E sites, respectively. Catalyzes the coordinated movement of the two tRNA molecules, the mRNA and conformational changes in the ribosome. The polypeptide is Elongation factor G, mitochondrial (Cryptococcus neoformans var. neoformans serotype D (strain B-3501A) (Filobasidiella neoformans)).